We begin with the raw amino-acid sequence, 392 residues long: INCREASED PETAL GROWTH ANISOTROPY 1-like protein 1 (392 aa).

Residues 11–52 adopt a coiled-coil conformation; it reads LLRLVKELQAYLVRNDKLEKENHELRQEVARLRAQVSNLKSH. Polar residues-rich tracts occupy residues 65-76 and 100-109; these read QSSYDGSNTDGS and PTIQGQSTAT. The tract at residues 65–128 is disordered; the sequence is QSSYDGSNTD…SKRTLGKRSV (64 aa). Residues 269–299 are a coiled coil; it reads KDSLTQALQRIQSLQDRLEESVNNTEKMRDS.

Belongs to the IPGA1 family.

The protein localises to the cytoplasm. It localises to the cytoskeleton. In terms of biological role, microtubule-associated protein probably involved in the regulation of microtubule organization. The sequence is that of INCREASED PETAL GROWTH ANISOTROPY 1-like protein 1 from Arabidopsis thaliana (Mouse-ear cress).